Consider the following 344-residue polypeptide: Sulfate/thiosulfate import ATP-binding protein CysA (344 aa).

One can recognise an ABC transporter domain in the interval 3–233 (ILIDNVSKNF…PESAFVMSFL (231 aa)). 35-42 (GPSGCGKS) provides a ligand contact to ATP.

It belongs to the ABC transporter superfamily. Sulfate/tungstate importer (TC 3.A.1.6) family. As to quaternary structure, the complex is composed of two ATP-binding proteins (CysA), two transmembrane proteins (CysT and CysW) and a solute-binding protein (CysP).

The protein resides in the cell inner membrane. The catalysed reaction is sulfate(out) + ATP + H2O = sulfate(in) + ADP + phosphate + H(+). It catalyses the reaction thiosulfate(out) + ATP + H2O = thiosulfate(in) + ADP + phosphate + H(+). Its function is as follows. Part of the ABC transporter complex CysAWTP involved in sulfate/thiosulfate import. Responsible for energy coupling to the transport system. This is Sulfate/thiosulfate import ATP-binding protein CysA from Gloeobacter violaceus (strain ATCC 29082 / PCC 7421).